A 131-amino-acid polypeptide reads, in one-letter code: Small ribosomal subunit protein bS18 (131 aa).

Positions 1 to 10 (MSNGTDSKTA) are enriched in polar residues. Residues 1-60 (MSNGTDSKTASAPPARSGGGFGGGGSRGGDRGDRGDRGGDRGDRGGGLGGDDDKRGGGRG) are disordered. A compositionally biased stretch (gly residues) spans 17–27 (SGGGFGGGGSR). Positions 28–44 (GGDRGDRGDRGGDRGDR) are enriched in basic and acidic residues.

Belongs to the bacterial ribosomal protein bS18 family. As to quaternary structure, part of the 30S ribosomal subunit. Forms a tight heterodimer with protein bS6.

Its function is as follows. Binds as a heterodimer with protein bS6 to the central domain of the 16S rRNA, where it helps stabilize the platform of the 30S subunit. This chain is Small ribosomal subunit protein bS18, found in Myxococcus xanthus (strain DK1622).